A 334-amino-acid polypeptide reads, in one-letter code: Beta-hexosaminidase (334 aa).

Residues aspartate 60, arginine 68, arginine 133, and 163–164 (KH) each bind substrate. Histidine 176 functions as the Proton donor/acceptor in the catalytic mechanism. Catalysis depends on aspartate 247, which acts as the Nucleophile.

It belongs to the glycosyl hydrolase 3 family. NagZ subfamily.

It localises to the cytoplasm. It carries out the reaction Hydrolysis of terminal non-reducing N-acetyl-D-hexosamine residues in N-acetyl-beta-D-hexosaminides.. Its pathway is cell wall biogenesis; peptidoglycan recycling. Functionally, plays a role in peptidoglycan recycling by cleaving the terminal beta-1,4-linked N-acetylglucosamine (GlcNAc) from peptide-linked peptidoglycan fragments, giving rise to free GlcNAc, anhydro-N-acetylmuramic acid and anhydro-N-acetylmuramic acid-linked peptides. In Xanthomonas axonopodis pv. citri (strain 306), this protein is Beta-hexosaminidase.